The sequence spans 545 residues: Chaperonin GroEL (545 aa).

Residues 31 to 34, 88 to 92, glycine 415, 478 to 480, and aspartate 494 each bind ATP; these read TLGP, DGTTT, and NAA.

This sequence belongs to the chaperonin (HSP60) family. In terms of assembly, forms a cylinder of 14 subunits composed of two heptameric rings stacked back-to-back. Interacts with the co-chaperonin GroES.

Its subcellular location is the cytoplasm. The enzyme catalyses ATP + H2O + a folded polypeptide = ADP + phosphate + an unfolded polypeptide.. Functionally, together with its co-chaperonin GroES, plays an essential role in assisting protein folding. The GroEL-GroES system forms a nano-cage that allows encapsulation of the non-native substrate proteins and provides a physical environment optimized to promote and accelerate protein folding. The chain is Chaperonin GroEL from Streptococcus pyogenes serotype M4 (strain MGAS10750).